Consider the following 233-residue polypeptide: DNA repair protein RecO (233 aa).

This sequence belongs to the RecO family.

In terms of biological role, involved in DNA repair and RecF pathway recombination. This Psychromonas ingrahamii (strain DSM 17664 / CCUG 51855 / 37) protein is DNA repair protein RecO.